A 68-amino-acid chain; its full sequence is KCNQ1 downstream neighbor protein (68 aa).

The tract at residues 28 to 68 is disordered; the sequence is GVASGCSPSKASQEARGKEKCPTLNGQPQWSALFTLPPQRE.

Shows reduced expression in Wilms' tumor samples.

This is KCNQ1 downstream neighbor protein (KCNQ1DN) from Homo sapiens (Human).